Here is a 518-residue protein sequence, read N- to C-terminus: Retinal dehydrogenase 2 (518 aa).

Position 168 is a phosphotyrosine (tyrosine 168). Residues 184-186, 210-213, and 264-266 each bind NAD(+); these read IPW, KPAE, and STE. The active-site Proton acceptor is the glutamate 286. The active-site Nucleophile is cysteine 320. Phosphoserine is present on serine 351. NAD(+) is bound by residues 366–370 and glutamate 417; that span reads KQYNK.

The protein belongs to the aldehyde dehydrogenase family. In terms of assembly, homotetramer. Found in testis and less abundantly in lung, brain, heart, liver and kidney.

It localises to the cytoplasm. The enzyme catalyses retinal + NAD(+) + H2O = retinoate + NADH + 2 H(+). The catalysed reaction is all-trans-retinal + NAD(+) + H2O = all-trans-retinoate + NADH + 2 H(+). It carries out the reaction all-trans-13,14-dihydroretinal + NAD(+) + H2O = all-trans-13,14-dihydroretinoate + NADH + 2 H(+). It participates in cofactor metabolism; retinol metabolism. Functionally, catalyzes the NAD-dependent oxidation of aldehyde substrates, such as all-trans-retinal and all-trans-13,14-dihydroretinal, to their corresponding carboxylic acids, all-trans-retinoate and all-trans-13,14-dihydroretinoate, respectively. Retinoate signaling is critical for the transcriptional control of many genes, for instance it is crucial for initiation of meiosis in both male and female. Recognizes retinal as substrate, both in its free form and when bound to cellular retinol-binding protein. Lacks activity with benzaldehyde, acetaldehyde and octanal. Displays complete lack of activity with citral. This chain is Retinal dehydrogenase 2 (Aldh1a2), found in Rattus norvegicus (Rat).